A 205-amino-acid chain; its full sequence is Holliday junction branch migration complex subunit RuvA (205 aa).

The segment at 1-67 (MITSIFGKVT…QIIEEAFAFN (67 aa)) is domain I. Residues 68 to 146 (TLEEKEWFCR…NNKNIKGVQV (79 aa)) form a domain II region. The segment at 147 to 150 (ADGY) is flexible linker. The segment at 150-205 (YDELFETLKSLGYKQQEIQDALKMIEVKPDFDISQLVAEVIKLMSFKNNEITNKTA) is domain III.

Belongs to the RuvA family. In terms of assembly, homotetramer. Forms an RuvA(8)-RuvB(12)-Holliday junction (HJ) complex. HJ DNA is sandwiched between 2 RuvA tetramers; dsDNA enters through RuvA and exits via RuvB. An RuvB hexamer assembles on each DNA strand where it exits the tetramer. Each RuvB hexamer is contacted by two RuvA subunits (via domain III) on 2 adjacent RuvB subunits; this complex drives branch migration. In the full resolvosome a probable DNA-RuvA(4)-RuvB(12)-RuvC(2) complex forms which resolves the HJ.

It localises to the cytoplasm. Functionally, the RuvA-RuvB-RuvC complex processes Holliday junction (HJ) DNA during genetic recombination and DNA repair, while the RuvA-RuvB complex plays an important role in the rescue of blocked DNA replication forks via replication fork reversal (RFR). RuvA specifically binds to HJ cruciform DNA, conferring on it an open structure. The RuvB hexamer acts as an ATP-dependent pump, pulling dsDNA into and through the RuvAB complex. HJ branch migration allows RuvC to scan DNA until it finds its consensus sequence, where it cleaves and resolves the cruciform DNA. This chain is Holliday junction branch migration complex subunit RuvA, found in Mycoplasma genitalium (strain ATCC 33530 / DSM 19775 / NCTC 10195 / G37) (Mycoplasmoides genitalium).